The following is a 167-amino-acid chain: RNA pyrophosphohydrolase (167 aa).

In terms of domain architecture, Nudix hydrolase spans 7–160 (PYRPCVGVMV…KRRAYEEVVA (154 aa)). The Nudix box signature appears at 48-69 (GGIDEGEDPLEAACRELYEETG).

This sequence belongs to the Nudix hydrolase family. RppH subfamily. A divalent metal cation serves as cofactor.

Accelerates the degradation of transcripts by removing pyrophosphate from the 5'-end of triphosphorylated RNA, leading to a more labile monophosphorylated state that can stimulate subsequent ribonuclease cleavage. The polypeptide is RNA pyrophosphohydrolase (Rhizobium meliloti (strain 1021) (Ensifer meliloti)).